A 442-amino-acid polypeptide reads, in one-letter code: Transposase InsG for insertion sequence element IS4 (442 aa).

It belongs to the transposase 11 family.

Functionally, involved in the transposition of the insertion sequence IS4. The protein is Transposase InsG for insertion sequence element IS4 (insG) of Escherichia coli (strain K12).